The primary structure comprises 1083 residues: FACT complex subunit spt16 (1083 aa).

Ser-437 carries the post-translational modification Phosphoserine. Residues 466–504 (LESKLRNEINTEEKRKEHQRELAQQLNERAKDRLARQGN) are a coiled coil. Positions 923-1083 (FEQGGWTFLD…NGHKSKKSRH (161 aa)) are disordered. Positions 935–987 (SGSEGENETAESEEDEAYNPTDAESDEESDEDSEYSEASEDSEESDEDLGSDE) are enriched in acidic residues. Residues 988–1023 (ESGKDWSDLEREAAEEDRNHDYAADDKPRNGKFDSK) show a composition bias toward basic and acidic residues. The segment covering 1024–1033 (KHGKSSKHSP) has biased composition (basic residues). Basic and acidic residues predominate over residues 1058 to 1076 (SSKDKDRKRSRDDSRDNGH).

Belongs to the peptidase M24 family. SPT16 subfamily. In terms of assembly, component of the FACT complex, a stable heterodimer of dre4/spt16 and Ssrp. Interacts with TRL/GAGA.

It localises to the nucleus. The protein localises to the chromosome. Component of the FACT complex, a general chromatin factor that acts to reorganize nucleosomes. The FACT complex is involved in multiple processes that require DNA as a template such as mRNA elongation, DNA replication and DNA repair. During transcription elongation the FACT complex acts as a histone chaperone that both destabilizes and restores nucleosomal structure. It facilitates the passage of RNA polymerase II and transcription by promoting the dissociation of one histone H2A-H2B dimer from the nucleosome, then subsequently promotes the reestablishment of the nucleosome following the passage of RNA polymerase II. The FACT complex is required for expression of Hox genes. The protein is FACT complex subunit spt16 (dre4) of Drosophila melanogaster (Fruit fly).